Consider the following 221-residue polypeptide: Interleukin-12 subunit alpha (221 aa).

A signal peptide spans 1-25 (MCPLRSLLLISTLVLLHHLPHLSLG). Disulfide bonds link Cys-39-Cys-112, Cys-66-Cys-198, and Cys-87-Cys-125. Asn-95 carries an N-linked (GlcNAc...) asparagine glycan.

Belongs to the IL-6 superfamily. In terms of assembly, heterodimer with IL12B; disulfide-linked. This heterodimer is known as interleukin IL-12. Heterodimer with EBI3/IL27B; not disulfide-linked. This heterodimer is known as interleukin IL-35. Interacts with NBR1; this interaction promotes IL-12 secretion.

The protein resides in the secreted. In terms of biological role, heterodimerizes with IL12B to form the IL-12 cytokine or with EBI3/IL27B to form the IL-35 cytokine. IL-12 is primarily produced by professional antigen-presenting cells (APCs) such as B-cells and dendritic cells (DCs) as well as macrophages and granulocytes and regulates T-cell and natural killer-cell responses, induces the production of interferon-gamma (IFN-gamma), favors the differentiation of T-helper 1 (Th1) cells and is an important link between innate resistance and adaptive immunity. Mechanistically, exerts its biological effects through a receptor composed of IL12R1 and IL12R2 subunits. Binding to the receptor results in the rapid tyrosine phosphorylation of a number of cellular substrates including the JAK family kinases TYK2 and JAK2. In turn, recruited STAT4 gets phosphorylated and translocates to the nucleus where it regulates cytokine/growth factor responsive genes. As part of IL-35, plays essential roles in maintaining the immune homeostasis of the liver microenvironment and also functions as an immune-suppressive cytokine. Mediates biological events through unconventional receptors composed of IL12RB2 and gp130/IL6ST heterodimers or homodimers. Signaling requires the transcription factors STAT1 and STAT4, which form a unique heterodimer that binds to distinct DNA sites. In Bubalus carabanensis (Swamp type water buffalo), this protein is Interleukin-12 subunit alpha (IL12A).